The following is a 324-amino-acid chain: GTP cyclohydrolase 1 (324 aa).

Disordered regions lie at residues Gly-33–Glu-59 and Val-79–His-119. Residues Ser-40 to Ser-49 are compositionally biased toward low complexity. 2 stretches are compositionally biased toward polar residues: residues Leu-50 to Glu-59 and Thr-93 to Pro-117. The Zn(2+) site is built by Cys-214, His-217, and Cys-285.

Belongs to the GTP cyclohydrolase I family. In terms of assembly, toroid-shaped homodecamer, composed of two pentamers of five dimers. In terms of tissue distribution, isoform B is expressed almost exclusively in adult heads.

It carries out the reaction GTP + H2O = 7,8-dihydroneopterin 3'-triphosphate + formate + H(+). Its pathway is cofactor biosynthesis; 7,8-dihydroneopterin triphosphate biosynthesis; 7,8-dihydroneopterin triphosphate from GTP: step 1/1. In terms of biological role, isoform B is required for eye pigment production, Isoform C may be required for normal embryonic development and segment pattern formation. The polypeptide is GTP cyclohydrolase 1 (Pu) (Drosophila melanogaster (Fruit fly)).